We begin with the raw amino-acid sequence, 288 residues long: Pyridoxal kinase PdxY (288 aa).

Substrate is bound by residues serine 12 and 47–48 (TQ). Residues aspartate 114, glutamate 151, lysine 184, and 211 to 214 (RPLL) contribute to the ATP site. Aspartate 225 is a substrate binding site.

This sequence belongs to the pyridoxine kinase family. PdxY subfamily. In terms of assembly, homodimer. Requires Mg(2+) as cofactor.

The enzyme catalyses pyridoxal + ATP = pyridoxal 5'-phosphate + ADP + H(+). The protein operates within cofactor metabolism; pyridoxal 5'-phosphate salvage; pyridoxal 5'-phosphate from pyridoxal: step 1/1. Functionally, pyridoxal kinase involved in the salvage pathway of pyridoxal 5'-phosphate (PLP). Catalyzes the phosphorylation of pyridoxal to PLP. This Pseudomonas syringae pv. tomato (strain ATCC BAA-871 / DC3000) protein is Pyridoxal kinase PdxY.